We begin with the raw amino-acid sequence, 131 residues long: D-ribose pyranase (131 aa).

Catalysis depends on H20, which acts as the Proton donor. Substrate contacts are provided by residues D28, H98, and 120–122 (YAN).

It belongs to the RbsD / FucU family. RbsD subfamily. Homodecamer.

It localises to the cytoplasm. The catalysed reaction is beta-D-ribopyranose = beta-D-ribofuranose. It participates in carbohydrate metabolism; D-ribose degradation; D-ribose 5-phosphate from beta-D-ribopyranose: step 1/2. Catalyzes the interconversion of beta-pyran and beta-furan forms of D-ribose. This chain is D-ribose pyranase, found in Bacillus cereus (strain ATCC 14579 / DSM 31 / CCUG 7414 / JCM 2152 / NBRC 15305 / NCIMB 9373 / NCTC 2599 / NRRL B-3711).